A 429-amino-acid polypeptide reads, in one-letter code: Putative chloride channel protein ClcB-like (429 aa).

11 helical membrane passes run 1-21 (MLAIAGLIGCAGALATIAFRE), 44-64 (LPWWARLLVPTAGGLLAGLTL), 146-166 (LLVACGAAAGITSAYNAPIAG), 168-188 (VFVCEIVFGAITTATLGPLLV), 200-220 (FFGYGAVYAMPHFDFVSGWEV), 221-241 (LTYLGLGLAAGMAGPLLLGLI), 259-279 (LALGGLIVGALSIRVPEVWGN), 283-303 (VVNGFLHAPWLWQTVALVLVC), 315-335 (GAVGGVFTPTLFCGAALGLLY), 354-376 (AVVGMGALLAATTHAPLMSILMI), and 383-405 (YQVVLPLMLACITGYVTAHATGA).

Belongs to the chloride channel (TC 2.A.49) family. ClcB subfamily.

It localises to the cell inner membrane. The polypeptide is Putative chloride channel protein ClcB-like (Ralstonia nicotianae (strain ATCC BAA-1114 / GMI1000) (Ralstonia solanacearum)).